The following is a 319-amino-acid chain: MSRRRRFKGRDVHGILLLDKPTGLTSNDVLQKVKRIYNAAKAGHTGALDPLATGMLPICLGEATKFSQYLLEADKRYEVTAKLGERTNTSDSDGEVVSTRPVNVALGTLIESLDQFRGPIMQVPSMYSALKHNGRPLYEYAREGIEIEREARPITVFELKLISFEGDEVKLEVHCSKGTYIRSLVDDLGEVLGCGAHVTQLRRTQVATYPYERMLTLEQLECIFEQAKAESIPPREQLDPLLLPMDTAVAALPEVNMLAAVAAYVNQGQAVQVAGAPQSGQVRMTVGPEREFIGVGEIDDEGRVAPKRLVRYHDEHDEE.

Asp-49 acts as the Nucleophile in catalysis.

This sequence belongs to the pseudouridine synthase TruB family. Type 1 subfamily.

It carries out the reaction uridine(55) in tRNA = pseudouridine(55) in tRNA. Functionally, responsible for synthesis of pseudouridine from uracil-55 in the psi GC loop of transfer RNAs. This Aeromonas salmonicida (strain A449) protein is tRNA pseudouridine synthase B.